A 321-amino-acid polypeptide reads, in one-letter code: MATH domain and coiled-coil domain-containing protein At3g58260 (321 aa).

Residues 6 to 135 (NNTFTWVIKN…NDEVMVAVAV (130 aa)) enclose the MATH domain. Positions 232 to 283 (KLDWLEKKLDELFEKKKEEADKIRMQNIEEELKDLRQKCSSLEALLKKEKTG) form a coiled coil.

This Arabidopsis thaliana (Mouse-ear cress) protein is MATH domain and coiled-coil domain-containing protein At3g58260.